A 95-amino-acid chain; its full sequence is MAWARDEGGAAVLEILVQPRASRTRAVGEHDGRLKIQLAAPPVDGAANAALVEFLAAALGVRRADVELLRGETGRRKTVRVAGITAAAAVAALAS.

This sequence belongs to the UPF0235 family.

In Anaeromyxobacter dehalogenans (strain 2CP-1 / ATCC BAA-258), this protein is UPF0235 protein A2cp1_1215.